Reading from the N-terminus, the 377-residue chain is tRNA-specific 2-thiouridylase MnmA (377 aa).

Residues Gly-8 to Ser-15 and Met-34 each bind ATP. Positions Asn-94–Asp-96 are interaction with target base in tRNA. The active-site Nucleophile is Cys-99. A disulfide bridge links Cys-99 with Cys-201. Gly-123 serves as a coordination point for ATP. An interaction with tRNA region spans residues Lys-151–Gln-153. Cys-201 acts as the Cysteine persulfide intermediate in catalysis. The segment at Arg-315–Tyr-316 is interaction with tRNA.

It belongs to the MnmA/TRMU family.

The protein resides in the cytoplasm. The catalysed reaction is S-sulfanyl-L-cysteinyl-[protein] + uridine(34) in tRNA + AH2 + ATP = 2-thiouridine(34) in tRNA + L-cysteinyl-[protein] + A + AMP + diphosphate + H(+). Functionally, catalyzes the 2-thiolation of uridine at the wobble position (U34) of tRNA, leading to the formation of s(2)U34. This Acinetobacter baumannii (strain ACICU) protein is tRNA-specific 2-thiouridylase MnmA.